The primary structure comprises 384 residues: Centrosomal protein of 44 kDa (384 aa).

The segment at 11–188 is binds with microtubules and centrioles; that stretch reads RKLEQRLRTL…TKCYSSALVE (178 aa). The interval 191–222 is disordered; that stretch reads EEEEPTSDSEGGSHLEHEMESPFETAETTPNS. Residues 201 to 210 are compositionally biased toward basic and acidic residues; that stretch reads GGSHLEHEME. Coiled coils occupy residues 221-260 and 353-378; these read NSEQ…KGKI and TEDS…SKLL.

As to quaternary structure, binds to centriolar microtubules.

It localises to the cytoplasm. The protein resides in the cytoskeleton. It is found in the microtubule organizing center. Its subcellular location is the centrosome. The protein localises to the centriole. It localises to the spindle pole. The protein resides in the midbody. Functionally, centriole-enriched microtubule-binding protein involved in centriole biogenesis. In collaboration with CEP295 and POC1B, is required for the centriole-to-centrosome conversion by ensuring the formation of bona fide centriole wall. Functions as a linker component that maintains centrosome cohesion. Associates with CROCC and regulates its stability and localization to the centrosome. This is Centrosomal protein of 44 kDa (cep44) from Xenopus laevis (African clawed frog).